A 184-amino-acid chain; its full sequence is Envelope protein 169 (184 aa).

Residues 1-6 lie on the Intravirion side of the membrane; the sequence is MKKYIK. A helical membrane pass occupies residues 7–27; sequence MYLVLLIAIILFITILVIFLI. At 28–184 the chain is on the virion surface side; sequence SGLFYPEQNP…TVMAIPRKVL (157 aa).

This sequence belongs to the asfivirus envelope protein p22 family.

It is found in the virion membrane. Its subcellular location is the host cell membrane. The chain is Envelope protein 169 from Ornithodoros (relapsing fever ticks).